We begin with the raw amino-acid sequence, 28 residues long: Morintide mO6 (28 aa).

The Chitin-binding type-1 domain maps to N1–C28. Disulfide bonds link C4–C18 and C24–C28.

In terms of tissue distribution, seeds (at protein level).

Its function is as follows. Chitin-binding protein which functions in defense against chitin-containing fungal pathogens. The polypeptide is Morintide mO6 (Moringa oleifera (Horseradish tree)).